The sequence spans 161 residues: Nucleotide-binding protein PSEEN4469 (161 aa).

The protein belongs to the YajQ family.

Its function is as follows. Nucleotide-binding protein. The polypeptide is Nucleotide-binding protein PSEEN4469 (Pseudomonas entomophila (strain L48)).